Here is a 261-residue protein sequence, read N- to C-terminus: Glucanase inhibitor protein 3 (261 aa).

The N-terminal stretch at 1–21 (MKVLSSLAAALIALSAVDVEA) is a signal peptide. A Peptidase S1 domain is found at 29-260 (ILGGGKVPVG…GIEWINSVIK (232 aa)). Cys-56 and Cys-72 are disulfide-bonded. Asn-108 carries an N-linked (GlcNAc...) asparagine glycan. 2 disulfide bridges follow: Cys-183-Cys-195 and Cys-205-Cys-236.

It belongs to the peptidase S1 family.

The protein resides in the secreted. Its function is as follows. Secreted effector that suppresses host plant glucan elicitor-mediated defense responses. Targets host endoglucanases and inhibits the endoglucanase-mediated release of elicitor-active glucan oligosaccharides from P.sojae cell walls. This chain is Glucanase inhibitor protein 3 (GIP3), found in Phytophthora sojae (strain P6497) (Soybean stem and root rot agent).